A 181-amino-acid polypeptide reads, in one-letter code: ATP-dependent protease subunit HslV (181 aa).

Threonine 11 is an active-site residue. Residues alanine 166, cysteine 169, and threonine 172 each contribute to the Na(+) site.

Belongs to the peptidase T1B family. HslV subfamily. A double ring-shaped homohexamer of HslV is capped on each side by a ring-shaped HslU homohexamer. The assembly of the HslU/HslV complex is dependent on binding of ATP.

Its subcellular location is the cytoplasm. It carries out the reaction ATP-dependent cleavage of peptide bonds with broad specificity.. With respect to regulation, allosterically activated by HslU binding. In terms of biological role, protease subunit of a proteasome-like degradation complex believed to be a general protein degrading machinery. The sequence is that of ATP-dependent protease subunit HslV from Chlorobaculum parvum (strain DSM 263 / NCIMB 8327) (Chlorobium vibrioforme subsp. thiosulfatophilum).